A 458-amino-acid chain; its full sequence is Na(+)/H(+) antiporter NhaA (458 aa).

12 helical membrane passes run 27-47 (FLHV…AALI), 78-98 (LHFW…GMEI), 114-134 (ILPI…YLSF), 143-163 (GWAV…ALLG), 172-192 (VILL…IAFF), 201-221 (GLAI…IGLA), 222-242 (SAWL…ITGV), 249-269 (VILG…PLTI), 316-336 (PWVA…VSFA), 346-366 (FLVV…GIIT), 388-408 (ILLI…VSML), and 421-441 (IGVL…GLIY).

It belongs to the NhaA Na(+)/H(+) (TC 2.A.33) antiporter family.

It localises to the cell inner membrane. It catalyses the reaction Na(+)(in) + 2 H(+)(out) = Na(+)(out) + 2 H(+)(in). In terms of biological role, na(+)/H(+) antiporter that extrudes sodium in exchange for external protons. The sequence is that of Na(+)/H(+) antiporter NhaA from Bartonella quintana (strain Toulouse) (Rochalimaea quintana).